Reading from the N-terminus, the 192-residue chain is INO80 complex subunit C (192 aa).

The disordered stretch occupies residues 1–44 (MAAQIPIVATTSTPGIVRNSKKRPASPSHNGSSGGGYGASKKKK).

As to quaternary structure, component of the chromatin remodeling INO80 complex; specifically part of a complex module associated with the helicase ATP-binding and the helicase C-terminal domain of INO80. Component of some MLL1/MLL complex, at least composed of the core components KMT2A/MLL1, ASH2L, HCFC1/HCF1, WDR5 and RBBP5, as well as the facultative components BACC1, CHD8, E2F6, HSP70, INO80C, KANSL1, LAS1L, MAX, MCRS1, MGA, MYST1/MOF, PELP1, PHF20, PRP31, RING2, RUVB1/TIP49A, RUVB2/TIP49B, SENP3, TAF1, TAF4, TAF6, TAF7, TAF9 and TEX10.

It is found in the nucleus. Functionally, proposed core component of the chromatin remodeling INO80 complex which is involved in transcriptional regulation, DNA replication and probably DNA repair. In Homo sapiens (Human), this protein is INO80 complex subunit C (INO80C).